A 524-amino-acid polypeptide reads, in one-letter code: tRNA-2-methylthio-N(6)-dimethylallyladenosine synthase (524 aa).

A compositionally biased stretch (basic and acidic residues) spans Met-1 to Ala-12. Positions Met-1–Gly-23 are disordered. Residues Arg-27–His-143 enclose the MTTase N-terminal domain. [4Fe-4S] cluster contacts are provided by Cys-36, Cys-72, Cys-106, Cys-180, Cys-184, and Cys-187. A Radical SAM core domain is found at Arg-166–Glu-402. Residues Gln-405–Val-476 form the TRAM domain.

The protein belongs to the methylthiotransferase family. MiaB subfamily. Monomer. [4Fe-4S] cluster serves as cofactor.

The protein localises to the cytoplasm. It carries out the reaction N(6)-dimethylallyladenosine(37) in tRNA + (sulfur carrier)-SH + AH2 + 2 S-adenosyl-L-methionine = 2-methylsulfanyl-N(6)-dimethylallyladenosine(37) in tRNA + (sulfur carrier)-H + 5'-deoxyadenosine + L-methionine + A + S-adenosyl-L-homocysteine + 2 H(+). Functionally, catalyzes the methylthiolation of N6-(dimethylallyl)adenosine (i(6)A), leading to the formation of 2-methylthio-N6-(dimethylallyl)adenosine (ms(2)i(6)A) at position 37 in tRNAs that read codons beginning with uridine. This is tRNA-2-methylthio-N(6)-dimethylallyladenosine synthase from Corynebacterium efficiens (strain DSM 44549 / YS-314 / AJ 12310 / JCM 11189 / NBRC 100395).